The primary structure comprises 165 residues: Endoribonuclease YbeY (165 aa).

Zn(2+)-binding residues include histidine 119, histidine 123, and histidine 129.

It belongs to the endoribonuclease YbeY family. Zn(2+) serves as cofactor.

It localises to the cytoplasm. In terms of biological role, single strand-specific metallo-endoribonuclease involved in late-stage 70S ribosome quality control and in maturation of the 3' terminus of the 16S rRNA. The polypeptide is Endoribonuclease YbeY (Streptomyces griseus subsp. griseus (strain JCM 4626 / CBS 651.72 / NBRC 13350 / KCC S-0626 / ISP 5235)).